A 661-amino-acid chain; its full sequence is Bifunctional xylanase/xylan deacetylase (661 aa).

The first 27 residues, 1-27 (MKLPTLGKCVVRTLMGAVALGAISVNA), serve as a signal peptide directing secretion. Residues 29 to 226 (TLSSNSTGTN…SRGSSDITVS (198 aa)) enclose the GH11 domain. Glu116 (nucleophile; for endoxylanase activity) is an active-site residue. Residue Glu213 is the Proton donor; for endoxylanase activity of the active site. A disordered region spans residues 220 to 259 (SSDITVSEGTSGGGTSSVGGASSSVNSSTGGGSSGGITVR). Positions 237-247 (VGGASSSVNSS) are enriched in low complexity. The tract at residues 394–577 (SNCSGYVGIT…AKGLCPGRID (184 aa)) is polysaccharide deacetylase. Positions 398–574 (GYVGITFDDG…NLRAKGLCPG (177 aa)) constitute a NodB homology domain. Residues 578–610 (PNTGRAVAPSSSGGSSSVALSSSSRSSSSAGGN) form a disordered region. Low complexity predominate over residues 581 to 608 (GRAVAPSSSGGSSSVALSSSSRSSSSAG). The CBM10 domain maps to 616–645 (QCNWWGTFYPLCQTQTSGWGWENSRSCIST).

It in the N-terminal section; belongs to the glycosyl hydrolase 11 (cellulase G) family.

The protein localises to the secreted. The catalysed reaction is Endohydrolysis of (1-&gt;4)-beta-D-xylosidic linkages in xylans.. It carries out the reaction Deacetylation of xylans and xylo-oligosaccharides.. The protein operates within glycan degradation; xylan degradation. Endo-acting xylanase which specifically cleaves internal linkages on the xylan backbone, releasing xylooligosaccharides. Is able to hydrolyze oat spelt xylan and the arabinoxylans from wheat and rye, releasing xylobiose as the major product. Also likely catalyzes, via its C-terminal domain, the removal of acetyl groups from acetylated xylan. Thus, has the capability of hydrolyzing acetylated xylan. Does not attack mannan, galactan, arabinan or any cellulosic substrates. The chain is Bifunctional xylanase/xylan deacetylase (xyn11A) from Cellvibrio japonicus (Pseudomonas fluorescens subsp. cellulosa).